The sequence spans 250 residues: Flavin-dependent thymidylate synthase (250 aa).

A ThyX domain is found at 7 to 233; sequence LRVQLIAKTE…PAVFADFEVT (227 aa). DUMP is bound by residues 92 to 95, 103 to 107, and R172; these read ELIR and QLSQR. FAD-binding positions include 95 to 97 and Q103; that span reads RHR. A ThyX motif motif is present at residues 95–105; sequence RHRHFSYSQLS. Residues 188-190 and H194 contribute to the FAD site; that span reads NYR. R199 lines the dUMP pocket. R199 acts as the Involved in ionization of N3 of dUMP, leading to its activation in catalysis.

Belongs to the thymidylate synthase ThyX family. Homotetramer. The cofactor is FAD.

The enzyme catalyses dUMP + (6R)-5,10-methylene-5,6,7,8-tetrahydrofolate + NADPH + H(+) = dTMP + (6S)-5,6,7,8-tetrahydrofolate + NADP(+). The protein operates within pyrimidine metabolism; dTTP biosynthesis. Its function is as follows. Catalyzes the reductive methylation of 2'-deoxyuridine-5'-monophosphate (dUMP) to 2'-deoxythymidine-5'-monophosphate (dTMP) while utilizing 5,10-methylenetetrahydrofolate (mTHF) as the methyl donor, and NADPH and FADH(2) as the reductant. The protein is Flavin-dependent thymidylate synthase of Mycobacterium marinum (strain ATCC BAA-535 / M).